The sequence spans 398 residues: MSAAIDELQAIIAELKSELEEQKTTTRNARERIERMSAEVVDSNPYSRLMALQRMNIVKDYERIRDKAVAIVGVGGVGSVTADMLTRCGIGKLILFDYDKVELANMNRLFFTPDQAGLSKVEAAARTLSFINPDVCIETHNYNITTVDNFDQFLSTISASGIAVGQPVDLVLSCVDNFEARMAINAACNEKNMNWFESGVSENAVSGHIQFVRPGDTACFACAPPLVVAENIDERTLKREGVCAASLPTTMGITASLLVQNALKYLLNFGEVSDYLGYNALSDFFPKMTLRPNTQCDDRNCLVRQKEFHLRPKPVEKLVEVEVSDEPLHACNDWGIELVADNVPTTTTKSPENTNVAFGLRLAYEAPDKSEKSETTATAGDGVSEASLEELMAQMKSM.

ATP contacts are provided by Gly76, Asp97, Lys120, Asn143, and Asn177. Residues Cys219 and Cys222 each coordinate Zn(2+). Residue Cys243 is the Glycyl thioester intermediate of the active site. Zn(2+)-binding residues include Cys296 and Cys301.

The protein belongs to the ubiquitin-activating E1 family. UBA5 subfamily.

E1-like enzyme which activates UFM1. The polypeptide is Ubiquitin-like modifier-activating enzyme 5 (Drosophila grimshawi (Hawaiian fruit fly)).